The sequence spans 360 residues: Phosphoserine aminotransferase (360 aa).

Arg-42 lines the L-glutamate pocket. Residues 76–77 (AS), Trp-102, Thr-152, Asp-171, and Gln-194 each bind pyridoxal 5'-phosphate. At Lys-195 the chain carries N6-(pyridoxal phosphate)lysine. 236–237 (NT) lines the pyridoxal 5'-phosphate pocket.

The protein belongs to the class-V pyridoxal-phosphate-dependent aminotransferase family. SerC subfamily. Homodimer. Pyridoxal 5'-phosphate serves as cofactor.

Its subcellular location is the cytoplasm. The catalysed reaction is O-phospho-L-serine + 2-oxoglutarate = 3-phosphooxypyruvate + L-glutamate. It catalyses the reaction 4-(phosphooxy)-L-threonine + 2-oxoglutarate = (R)-3-hydroxy-2-oxo-4-phosphooxybutanoate + L-glutamate. It participates in amino-acid biosynthesis; L-serine biosynthesis; L-serine from 3-phospho-D-glycerate: step 2/3. Its function is as follows. Catalyzes the reversible conversion of 3-phosphohydroxypyruvate to phosphoserine and of 3-hydroxy-2-oxo-4-phosphonooxybutanoate to phosphohydroxythreonine. In Geobacillus kaustophilus (strain HTA426), this protein is Phosphoserine aminotransferase.